A 298-amino-acid polypeptide reads, in one-letter code: O-glycoside alpha-1,2-mannosyltransferase homolog 6 (298 aa).

Residue glutamate 220 is the Nucleophile of the active site.

The protein belongs to the glycosyltransferase 15 family.

The protein resides in the cytoplasm. It localises to the nucleus. In terms of biological role, probable mannosyltransferase involved in O-glycosylation of cell wall and secreted proteins. The polypeptide is O-glycoside alpha-1,2-mannosyltransferase homolog 6 (omh6) (Schizosaccharomyces pombe (strain 972 / ATCC 24843) (Fission yeast)).